The following is a 440-amino-acid chain: Histidinol dehydrogenase (440 aa).

Residues Tyr139, Gln201, and Asn224 each contribute to the NAD(+) site. 3 residues coordinate substrate: Ser247, Gln269, and His272. Residues Gln269 and His272 each coordinate Zn(2+). Residues Glu337 and His338 each act as proton acceptor in the active site. Residues His338, Asp371, Glu425, and His430 each contribute to the substrate site. Zn(2+) is bound at residue Asp371. A Zn(2+)-binding site is contributed by His430.

Belongs to the histidinol dehydrogenase family. Zn(2+) is required as a cofactor.

It carries out the reaction L-histidinol + 2 NAD(+) + H2O = L-histidine + 2 NADH + 3 H(+). Its pathway is amino-acid biosynthesis; L-histidine biosynthesis; L-histidine from 5-phospho-alpha-D-ribose 1-diphosphate: step 9/9. Functionally, catalyzes the sequential NAD-dependent oxidations of L-histidinol to L-histidinaldehyde and then to L-histidine. This is Histidinol dehydrogenase from Prochlorococcus marinus (strain MIT 9312).